A 184-amino-acid polypeptide reads, in one-letter code: ATP synthase subunit b, chloroplastic (184 aa).

The chain crosses the membrane as a helical span at residues 29-49 (INIINLGIVIGLLVYLGEGVL).

Belongs to the ATPase B chain family. As to quaternary structure, F-type ATPases have 2 components, F(1) - the catalytic core - and F(0) - the membrane proton channel. F(1) has five subunits: alpha(3), beta(3), gamma(1), delta(1), epsilon(1). F(0) has four main subunits: a(1), b(1), b'(1) and c(10-14). The alpha and beta chains form an alternating ring which encloses part of the gamma chain. F(1) is attached to F(0) by a central stalk formed by the gamma and epsilon chains, while a peripheral stalk is formed by the delta, b and b' chains.

It localises to the plastid. Its subcellular location is the chloroplast thylakoid membrane. In terms of biological role, f(1)F(0) ATP synthase produces ATP from ADP in the presence of a proton or sodium gradient. F-type ATPases consist of two structural domains, F(1) containing the extramembraneous catalytic core and F(0) containing the membrane proton channel, linked together by a central stalk and a peripheral stalk. During catalysis, ATP synthesis in the catalytic domain of F(1) is coupled via a rotary mechanism of the central stalk subunits to proton translocation. Component of the F(0) channel, it forms part of the peripheral stalk, linking F(1) to F(0). The polypeptide is ATP synthase subunit b, chloroplastic (Psilotum nudum (Whisk fern)).